Consider the following 226-residue polypeptide: Imidazoleglycerol-phosphate dehydratase (226 aa).

Positions 23 to 55 are disordered; it reads LTGGPIERPQPSLFASEKGANTAGPDDASQTTA.

The protein belongs to the imidazoleglycerol-phosphate dehydratase family.

It catalyses the reaction D-erythro-1-(imidazol-4-yl)glycerol 3-phosphate = 3-(imidazol-4-yl)-2-oxopropyl phosphate + H2O. It functions in the pathway amino-acid biosynthesis; L-histidine biosynthesis; L-histidine from 5-phospho-alpha-D-ribose 1-diphosphate: step 6/9. This is Imidazoleglycerol-phosphate dehydratase (HIS3) from Maudiozyma humilis (Sour dough yeast).